Reading from the N-terminus, the 129-residue chain is Large ribosomal subunit protein bL12 (129 aa).

Positions 94 to 113 are disordered; the sequence is TEGLPKTVKEKTSKSDAEDT.

It belongs to the bacterial ribosomal protein bL12 family. Homodimer. Part of the ribosomal stalk of the 50S ribosomal subunit. Forms a multimeric L10(L12)X complex, where L10 forms an elongated spine to which 2 to 4 L12 dimers bind in a sequential fashion. Binds GTP-bound translation factors.

Forms part of the ribosomal stalk which helps the ribosome interact with GTP-bound translation factors. Is thus essential for accurate translation. This Chlamydia pneumoniae (Chlamydophila pneumoniae) protein is Large ribosomal subunit protein bL12.